Here is a 179-residue protein sequence, read N- to C-terminus: Large ribosomal subunit protein uL5 (179 aa).

Belongs to the universal ribosomal protein uL5 family. In terms of assembly, part of the 50S ribosomal subunit; part of the 5S rRNA/L5/L18/L25 subcomplex. Contacts the 5S rRNA and the P site tRNA. Forms a bridge to the 30S subunit in the 70S ribosome.

Functionally, this is one of the proteins that bind and probably mediate the attachment of the 5S RNA into the large ribosomal subunit, where it forms part of the central protuberance. In the 70S ribosome it contacts protein S13 of the 30S subunit (bridge B1b), connecting the 2 subunits; this bridge is implicated in subunit movement. Contacts the P site tRNA; the 5S rRNA and some of its associated proteins might help stabilize positioning of ribosome-bound tRNAs. The sequence is that of Large ribosomal subunit protein uL5 from Klebsiella pneumoniae (strain 342).